The chain runs to 483 residues: Prenyltransferase vrtC (483 aa).

The protein belongs to the tryptophan dimethylallyltransferase family.

It participates in secondary metabolite biosynthesis; terpenoid biosynthesis. In terms of biological role, prenyltransferase; part of the gene cluster that mediates the biosynthesis of viridicatumtoxin, a tetracycline-like fungal meroterpenoid with a unique, fused spirobicyclic ring system. The first step of the pathway is the production of the malonamoyl-CoA starter unit for the polyketide synthase vrtA. The aldolase vrtJ may be involved in the synthesis of the malonamate substrate for malonamoyl-CoA synthetase vrtB. The polyketide synthase vrtA then may utilize the malonamoyl-CoA starter unit, followed by sequential condensation of eight malonyl-CoA units to form the polyketide backbone. The cyclization of the last ring could be mediated by the lactamase-like protein vrtG. The proposed post-PKS tailoring steps are a hydroxylation at C5 catalyzed the cytochrome P450 monooxygenase vrtE, a hydroxylation at C12a catalyzed by VrtH and/or VrtI, and an O-methylation by the O-methyltransferase vrtF. VrtC is then proposed to catalyze the transfer of a geranyl group synthesized by vrtD to the aromatic C ring of the tetracyclic polyketide intermediate of viridicatumtoxin to yield previridicatumtoxin. Finally, the cytochrome P450 monooxygenase vrtK catalyzes the spirocyclization of the geranyl moiety of previridicatumtoxin to afford viridicatumtoxin. This Penicillium aethiopicum protein is Prenyltransferase vrtC.